The chain runs to 142 residues: Hemoglobin subunit alpha (142 aa).

Ser1 is modified (N-acetylserine). One can recognise a Globin domain in the interval 1–142 (SLSDKDKAAV…VALALAERYR (142 aa)). His59 contacts O2. His88 serves as a coordination point for heme b.

This sequence belongs to the globin family. As to quaternary structure, heterotetramer of two alpha chains and two beta chains. In terms of tissue distribution, red blood cells.

In terms of biological role, involved in oxygen transport from gills to the various peripheral tissues. The chain is Hemoglobin subunit alpha (hba) from Gymnodraco acuticeps (Antarctic dragonfish).